The chain runs to 97 residues: Aspartyl/glutamyl-tRNA(Asn/Gln) amidotransferase subunit C (97 aa).

Belongs to the GatC family. In terms of assembly, heterotrimer of A, B and C subunits.

The enzyme catalyses L-glutamyl-tRNA(Gln) + L-glutamine + ATP + H2O = L-glutaminyl-tRNA(Gln) + L-glutamate + ADP + phosphate + H(+). The catalysed reaction is L-aspartyl-tRNA(Asn) + L-glutamine + ATP + H2O = L-asparaginyl-tRNA(Asn) + L-glutamate + ADP + phosphate + 2 H(+). In terms of biological role, allows the formation of correctly charged Asn-tRNA(Asn) or Gln-tRNA(Gln) through the transamidation of misacylated Asp-tRNA(Asn) or Glu-tRNA(Gln) in organisms which lack either or both of asparaginyl-tRNA or glutaminyl-tRNA synthetases. The reaction takes place in the presence of glutamine and ATP through an activated phospho-Asp-tRNA(Asn) or phospho-Glu-tRNA(Gln). In Parasynechococcus marenigrum (strain WH8102), this protein is Aspartyl/glutamyl-tRNA(Asn/Gln) amidotransferase subunit C.